The sequence spans 89 residues: Small ribosomal subunit protein uS15 (89 aa).

The protein belongs to the universal ribosomal protein uS15 family. In terms of assembly, part of the 30S ribosomal subunit. Forms a bridge to the 50S subunit in the 70S ribosome, contacting the 23S rRNA.

Functionally, one of the primary rRNA binding proteins, it binds directly to 16S rRNA where it helps nucleate assembly of the platform of the 30S subunit by binding and bridging several RNA helices of the 16S rRNA. In terms of biological role, forms an intersubunit bridge (bridge B4) with the 23S rRNA of the 50S subunit in the ribosome. The sequence is that of Small ribosomal subunit protein uS15 from Acidothermus cellulolyticus (strain ATCC 43068 / DSM 8971 / 11B).